Reading from the N-terminus, the 489-residue chain is 5-hydroxytryptamine receptor 3A (489 aa).

Positions 1 to 23 (MRLCIPQVLLALFLSMLTAPGEG) are cleaved as a signal peptide. The Extracellular segment spans residues 24-246 (SRRRATQARD…MKFYVIIRRR (223 aa)). N-linked (GlcNAc...) asparagine glycans are attached at residues Asn109, Asn175, and Asn191. A disulfide bridge connects residues Cys162 and Cys176. The helical transmembrane segment at 247–273 (PLFYAVSLLLPSIFLMVVDIVGFCLPP) threads the bilayer. Residues 274–278 (DSGER) lie on the Cytoplasmic side of the membrane. Residues 279 to 297 (VSFKITLLLGYSVFLIIVS) form a helical membrane-spanning segment. At 298–307 (DTLPATAIGT) the chain is on the extracellular side. Residues 308–326 (PLIGVYFVVCMALLVISLA) traverse the membrane as a helical segment. Residues 327-466 (ETIFIVRLVH…GYVLDRLLFR (140 aa)) lie on the Cytoplasmic side of the membrane. The HA-stretch; determines single-channel conductance in 5-HT3 receptors stretch occupies residues 425–461 (AVRGLLQELSSIRHFLEKRDEMREVARDWLRVGYVLD). The helical transmembrane segment at 467–486 (IYLLAVLAYSITLVTLWSIW) threads the bilayer. The Extracellular portion of the chain corresponds to 487 to 489 (HYS).

Belongs to the ligand-gated ion channel (TC 1.A.9) family. 5-hydroxytryptamine receptor (TC 1.A.9.2) subfamily. HTR3A sub-subfamily. In terms of assembly, forms homopentameric as well as heteropentameric serotonin-activated cation-selective channel complexes with HTR3B or HTR3C or HTR3D or HTR3E. The homomeric complex is functional but exhibits low conductance with modified voltage dependence, and decreased agonist and antagonist affinity. Heteropentameric complexes display properties which resemble that of neuronal serotonin-activated channels in vivo. Interacts with RIC3. Brain, spinal cord, and heart.

Its subcellular location is the postsynaptic cell membrane. It is found in the cell membrane. The enzyme catalyses Na(+)(in) = Na(+)(out). The catalysed reaction is K(+)(in) = K(+)(out). It carries out the reaction Ca(2+)(in) = Ca(2+)(out). It catalyses the reaction Mg(2+)(in) = Mg(2+)(out). Its function is as follows. Forms serotonin (5-hydroxytryptamine/5-HT3)-activated cation-selective channel complexes, which when activated cause fast, depolarizing responses in neurons. This is 5-hydroxytryptamine receptor 3A from Mus musculus (Mouse).